Reading from the N-terminus, the 269-residue chain is Expansin-B9 (269 aa).

Residues 1–24 (MGSLANNIMVVGAVLAALVVGGSC) form the signal peptide. Asn34 carries an N-linked (GlcNAc...) asparagine glycan. The region spanning 63–169 (GGACGIKNVN…RRVRCKYPAG (107 aa)) is the Expansin-like EG45 domain. Intrachain disulfides connect Cys66–Cys94, Cys97–Cys164, and Cys102–Cys108. Residues 183 to 264 (NYVAVLVKFV…NWRPDAVYTS (82 aa)) enclose the Expansin-like CBD domain.

Belongs to the expansin family. Expansin B subfamily. In terms of tissue distribution, expressed in anthers and pollen.

It localises to the secreted. The protein localises to the cell wall. Its subcellular location is the membrane. In terms of biological role, may aid fertilization by loosening the cell wall of the stigma and style, thereby facilitating penetration of the pollen tube. Acts selectively on grass cell walls, which are relatively poor in pectins and xyloglucans and rich in glucuronoarabinoxylans and (1-3),(1-4)-beta-D-glucans, when compared with cell walls of other angiosperms, including other monocots. This chain is Expansin-B9 (EXPB9), found in Zea mays (Maize).